The primary structure comprises 558 residues: Factor VII-activating protease (558 aa).

Residues 1–23 (MSVVMLVFRVLLLIALVGNSAIG) form the signal peptide. EGF-like domains lie at 71–107 (DDDPCQSNPCEHGGDCIIRGNTFSCSCPAPFSGSRCQ), 109–146 (VQNKCKDNPCVQGDCLITQTPPYYRCACKYPYTGPDCS), and 148–186 (VLPVCRPNPCQNGGVCSRHRRRSRFSCACPDQYKGRFCE). Cystine bridges form between cysteine 75-cysteine 86, cysteine 80-cysteine 95, cysteine 97-cysteine 106, cysteine 113-cysteine 123, cysteine 118-cysteine 134, cysteine 136-cysteine 145, cysteine 152-cysteine 163, cysteine 157-cysteine 174, cysteine 176-cysteine 185, cysteine 192-cysteine 274, cysteine 213-cysteine 255, cysteine 244-cysteine 269, cysteine 299-cysteine 433, cysteine 345-cysteine 361, cysteine 353-cysteine 422, cysteine 445-cysteine 513, cysteine 475-cysteine 491, and cysteine 503-cysteine 531. Residues 191-274 (DCYVGDGYSY…KWEYCNVEVC (84 aa)) form the Kringle domain. A Peptidase S1 domain is found at 312-553 (IYGGFKSTAG…FLNWIKTTMH (242 aa)). Active-site charge relay system residues include histidine 360 and aspartate 409. The Charge relay system role is filled by serine 507.

Belongs to the peptidase S1 family. As to quaternary structure, heterodimer; disulfide-linked. Heterodimer of a 50 kDa heavy and a 27 kDa light chain linked by a disulfide bond. Post-translationally, proteolytic cleavage at Gly-23 or Met-27 can give rise to the 50 kDa heavy chain (HC) and cleavage at Arg-311 or Lys-317 can give rise to the 27 kDa light chain (LC). The HC can undergo further proteolytic cleavage giving rise to a 26 kDa fragment. The LC can undergo further proteolytic cleavage at Arg-311 leading to a 17-kDa fragment and at Arg-478 leading to a 8-kDa fragment.

The protein resides in the secreted. Its function is as follows. Cleaves the alpha-chain at multiple sites and the beta-chain between 'Lys-53' and 'Lys-54' but not the gamma-chain of fibrinogen and therefore does not initiate the formation of the fibrin clot and does not cause the fibrinolysis directly. It does not cleave (activate) prothrombin and plasminogen but converts the inactive single chain urinary plasminogen activator (pro-urokinase) to the active two chain form. Activates coagulation factor VII. May function as a tumor suppressor negatively regulating cell proliferation and cell migration. This Rattus norvegicus (Rat) protein is Factor VII-activating protease.